The following is a 147-amino-acid chain: MALQRTHSLLLLLLLTLLGLGLVQPSYGQDGMYQRFLRQHVHPEETGGSDRYCNLMMQRRKMTLYHCKRFNTFIHEDIWNIRSICSTTNIQCKNGKMNCHEGVVKVTDCRDTGSSRAPNCRYRAIASTRRVVIACEGNPQVPVHFDG.

Residues 1 to 28 form the signal peptide; that stretch reads MALQRTHSLLLLLLLTLLGLGLVQPSYG. Q29 carries the pyrrolidone carboxylic acid modification. Residues R35, H40, K68, N71, and T72 each coordinate dUMP. The Proton acceptor role is filled by H40. Disulfide bonds link C53–C109, C67–C120, C85–C135, and C92–C99. H144 functions as the Proton donor in the catalytic mechanism. F145 provides a ligand contact to dUMP.

It belongs to the pancreatic ribonuclease family. As to expression, expressed in the cortical and medullary tubules of the kidney, and in the transitional epithelium of the urinary bladder (at protein level).

It localises to the secreted. Functionally, cleaves preferentially after uridine bases. Has antimicrobial activity against uropathogenic E.coli (UPEC). Probably contributes to urinary tract sterility. This Homo sapiens (Human) protein is Ribonuclease 4 (RNASE4).